The primary structure comprises 73 residues: Large ribosomal subunit protein bL31c (73 aa).

It belongs to the bacterial ribosomal protein bL31 family. Type A subfamily. In terms of assembly, part of the 50S ribosomal subunit.

It is found in the plastid. The protein resides in the chloroplast. In terms of biological role, binds the 23S rRNA. The polypeptide is Large ribosomal subunit protein bL31c (Palmaria palmata (Dulse)).